The sequence spans 1104 residues: General transcription factor II-I repeat domain-containing protein 1 (1104 aa).

Glycyl lysine isopeptide (Lys-Gly) (interchain with G-Cter in SUMO2) cross-links involve residues Lys-27, Lys-184, Lys-212, Lys-225, Lys-238, Lys-271, Lys-337, Lys-436, Lys-439, and Lys-443. The stretch at 119–213 (LEQCSDVYLL…PDDGGQDTKA (95 aa)) is one GTF2I-like 1 repeat. One copy of the GTF2I-like 2 repeat lies at 342–436 (IKEMEDINTL…FDERIFTGNK (95 aa)). At Ser-448 the chain carries Phosphoserine. Positions 509–559 (SDPSPTSEEMTDSLPGHLPSEDSGYGMEMPADKGPSEEPWSEERPAEESPG) are disordered. Positions 538–555 (PADKGPSEEPWSEERPAE) are enriched in basic and acidic residues. The GTF2I-like 3 repeat unit spans residues 556–650 (ESPGDVIRPL…ELLTDGVKEP (95 aa)). Glycyl lysine isopeptide (Lys-Gly) (interchain with G-Cter in SUMO2) cross-links involve residues Lys-567, Lys-579, Lys-588, Lys-622, Lys-638, Lys-669, Lys-709, Lys-717, Lys-757, Lys-759, and Lys-772. The stretch at 681-775 (LSRIDIANTL…FQGLIPKPET (95 aa)) is one GTF2I-like 4 repeat. A disordered region spans residues 783-802 (EAGKTTRPRRLQQDTWQPDE). A GTF2I-like 5 repeat occupies 805–899 (ANRLGEKVIL…LQPFAEVCND (95 aa)). Residues Lys-841 and Lys-901 each participate in a glycyl lysine isopeptide (Lys-Gly) (interchain with G-Cter in SUMO2) cross-link. One copy of the GTF2I-like 6 repeat lies at 908–1002 (SNKLGKKVIL…LQPFGDVCNN (95 aa)). 2 disordered regions span residues 1001 to 1044 (NNAK…VAST) and 1058 to 1104 (LHPN…LPTR). The Nuclear localization signal motif lies at 1012-1019 (PKRKRKRV). A compositionally biased stretch (low complexity) spans 1021 to 1043 (EGNSVSSSSSSSSSSSNPESVAS).

This sequence belongs to the TFII-I family. Interacts with the retinoblastoma protein (RB1) via its C-terminus. As to expression, widely expressed.

It localises to the nucleus. In terms of biological role, may be a transcription regulator involved in cell-cycle progression and skeletal muscle differentiation. May repress GTF2I transcriptional functions, by preventing its nuclear residency, or by inhibiting its transcriptional activation. May contribute to slow-twitch fiber type specificity during myogenesis and in regenerating muscles. Binds troponin I slow-muscle fiber enhancer (USE B1). Binds specifically and with high affinity to the EFG sequences derived from the early enhancer of HOXC8. The polypeptide is General transcription factor II-I repeat domain-containing protein 1 (Gtf2ird1) (Mus musculus (Mouse)).